The chain runs to 93 residues: Small ribosomal subunit protein bS6 (93 aa).

This sequence belongs to the bacterial ribosomal protein bS6 family.

In terms of biological role, binds together with bS18 to 16S ribosomal RNA. In Treponema denticola (strain ATCC 35405 / DSM 14222 / CIP 103919 / JCM 8153 / KCTC 15104), this protein is Small ribosomal subunit protein bS6.